The chain runs to 218 residues: 7-cyano-7-deazaguanine synthase (218 aa).

Residue 9 to 19 (YSGGMDSFTVL) participates in ATP binding. Residues cysteine 185, cysteine 193, cysteine 196, and cysteine 199 each coordinate Zn(2+).

The protein belongs to the QueC family. The cofactor is Zn(2+).

It carries out the reaction 7-carboxy-7-deazaguanine + NH4(+) + ATP = 7-cyano-7-deazaguanine + ADP + phosphate + H2O + H(+). The protein operates within purine metabolism; 7-cyano-7-deazaguanine biosynthesis. Functionally, catalyzes the ATP-dependent conversion of 7-carboxy-7-deazaguanine (CDG) to 7-cyano-7-deazaguanine (preQ(0)). The polypeptide is 7-cyano-7-deazaguanine synthase (Alteromonas mediterranea (strain DSM 17117 / CIP 110805 / LMG 28347 / Deep ecotype)).